The following is an 884-amino-acid chain: Alanine--tRNA ligase (884 aa).

Residues histidine 572, histidine 576, cysteine 673, and histidine 677 each coordinate Zn(2+).

This sequence belongs to the class-II aminoacyl-tRNA synthetase family. The cofactor is Zn(2+).

Its subcellular location is the cytoplasm. It catalyses the reaction tRNA(Ala) + L-alanine + ATP = L-alanyl-tRNA(Ala) + AMP + diphosphate. Functionally, catalyzes the attachment of alanine to tRNA(Ala) in a two-step reaction: alanine is first activated by ATP to form Ala-AMP and then transferred to the acceptor end of tRNA(Ala). Also edits incorrectly charged Ser-tRNA(Ala) and Gly-tRNA(Ala) via its editing domain. The polypeptide is Alanine--tRNA ligase (Xylella fastidiosa (strain M12)).